The primary structure comprises 620 residues: Protein NRT1/ PTR FAMILY 2.13 (620 aa).

Residues 1–32 (MVLEDRKDGSSLPGRSGSFSKSSPSELDVVDP) are disordered. Low complexity predominate over residues 10–25 (SSLPGRSGSFSKSSPS). 12 helical membrane passes run 70–90 (LGSI…FHLE), 95–115 (ANVI…GAYI), 126–146 (IAFA…TASF), 167–187 (KLQI…SGGI), 213–233 (FFNW…TVVV), 241–261 (WIIG…MFFA), 364–384 (IVPI…QGTF), 402–422 (IPAG…LPFY), 443–463 (LQRI…AGIV), 485–505 (VFWL…NIIG), 524–544 (SLFS…VTVV), and 568–588 (YFYY…WYCA).

It belongs to the major facilitator superfamily. Proton-dependent oligopeptide transporter (POT/PTR) (TC 2.A.17) family. Interacts with NLA. In terms of processing, ubiquitinated by NLA. Ubiquitination of NPF2.13 leads to its degradation by the proteasome. In terms of tissue distribution, expressed in leaves and flowers. Detected in stems and siliques. Highest expression in the distal lamina of older leaves. Restricted to the sieve element and companion cell complex of the minor vein.

Its subcellular location is the cell membrane. Its function is as follows. Low-affinity proton-dependent nitrate transporter. Not involved in dipeptides transport, but has a weak glucosinolate transport activity. Involved in phloem loading and nitrate remobilization from the older leaves to other tissues. The protein is Protein NRT1/ PTR FAMILY 2.13 (NPF2.13) of Arabidopsis thaliana (Mouse-ear cress).